Here is a 107-residue protein sequence, read N- to C-terminus: Iron-binding protein IscA (107 aa).

Positions 35, 99, and 101 each coordinate Fe cation.

This sequence belongs to the HesB/IscA family. Homodimer; may form tetramers and higher multimers. Requires Fe cation as cofactor.

Is able to transfer iron-sulfur clusters to apo-ferredoxin. Multiple cycles of [2Fe2S] cluster formation and transfer are observed, suggesting that IscA acts catalytically. Recruits intracellular free iron so as to provide iron for the assembly of transient iron-sulfur cluster in IscU in the presence of IscS, L-cysteine and the thioredoxin reductase system TrxA/TrxB. The polypeptide is Iron-binding protein IscA (Salmonella newport (strain SL254)).